The primary structure comprises 363 residues: Ribosome-binding ATPase YchF (363 aa).

Positions phenylalanine 3–leucine 256 constitute an OBG-type G domain. Residue asparagine 12 to threonine 17 participates in ATP binding. Positions 16 and 36 each coordinate Mg(2+). In terms of domain architecture, TGS spans asparagine 278–phenylalanine 361.

The protein belongs to the TRAFAC class OBG-HflX-like GTPase superfamily. OBG GTPase family. YchF/OLA1 subfamily. Mg(2+) is required as a cofactor.

Functionally, ATPase that binds to both the 70S ribosome and the 50S ribosomal subunit in a nucleotide-independent manner. In Pasteurella multocida (strain Pm70), this protein is Ribosome-binding ATPase YchF.